The sequence spans 163 residues: Phosphopantetheine adenylyltransferase (163 aa).

Thr9 is a substrate binding site. Residues 9–10 (TF) and His17 contribute to the ATP site. The substrate site is built by Lys41, Leu73, and Arg87. Residues 88–90 (GLR), Glu98, and 123–129 (YQFISGT) contribute to the ATP site.

The protein belongs to the bacterial CoaD family. Homohexamer. It depends on Mg(2+) as a cofactor.

The protein localises to the cytoplasm. The enzyme catalyses (R)-4'-phosphopantetheine + ATP + H(+) = 3'-dephospho-CoA + diphosphate. Its pathway is cofactor biosynthesis; coenzyme A biosynthesis; CoA from (R)-pantothenate: step 4/5. Reversibly transfers an adenylyl group from ATP to 4'-phosphopantetheine, yielding dephospho-CoA (dPCoA) and pyrophosphate. In Herminiimonas arsenicoxydans, this protein is Phosphopantetheine adenylyltransferase.